The following is a 439-amino-acid chain: Secreted aspartic protease LUC8 (439 aa).

Positions 1–20 (MMHAFHHLAVLLIGSLPASA) are cleaved as a signal peptide. N-linked (GlcNAc...) asparagine glycans are attached at residues asparagine 33 and asparagine 54. The Peptidase A1 domain maps to 51 to 435 (YLFNITVGTP…DFETQSFGLA (385 aa)). Aspartate 69 is a catalytic residue. Residues asparagine 110, asparagine 126, asparagine 179, and asparagine 289 are each glycosylated (N-linked (GlcNAc...) asparagine). Aspartate 300 is an active-site residue. 2 N-linked (GlcNAc...) asparagine glycosylation sites follow: asparagine 329 and asparagine 373. A disulfide bridge links cysteine 355 with cysteine 391.

The protein belongs to the peptidase A1 family.

Its subcellular location is the secreted. Functionally, secreted aspartic protease; part of the gene cluster that mediates the biosynthesis of the mycotoxin lucilactaene and the lucilactaene-related compound NG-391 that act as cell cycle inhibitors with potent growth inhibitory activity against malarial parasites, moderate growth inhibitory activity against cancer cells, and no activity against bacteria and fungi. Within the cluster, LUC7 and LUC8 encode proteins which are not commonly involved in the biosynthesis of secondary metabolites and are not essential for lucilactaene biosynthesis. This chain is Secreted aspartic protease LUC8, found in Fusarium sp.